The sequence spans 509 residues: Protein disulfide-isomerase (509 aa).

The signal sequence occupies residues M1–A18. The Thioredoxin 1 domain occupies W19–G135. Active-site nucleophile residues include C54 and C57. C54 and C57 are disulfide-bonded. An N6-succinyllysine mark is found at K223 and K272. A phosphoserine mark is found at S332 and S358. In terms of domain architecture, Thioredoxin 2 spans F347–Q476. Residues C398 and C401 each act as nucleophile in the active site. A disulfide bridge links C398 with C401. S428 carries the phosphoserine modification. Residues L471–L509 form a disordered region. Acidic residues predominate over residues A479–D501. The short motif at R506–L509 is the Prevents secretion from ER element.

The protein belongs to the protein disulfide isomerase family. Heterodimer; heterodimerizes with the protein microsomal triglyceride transfer MTTP. Homodimer. Monomers and homotetramers may also occur. Interacts with P4HA2, forming a heterotetramer consisting of 2 alpha subunits (P4HA2) and 2 beta (P4HB), where P4HB plays the role of a structural subunit; this tetramer catalyzes the formation of 4-hydroxyproline in collagen. Also constitutes the structural subunit of the microsomal triacylglycerol transfer protein MTTP in mammalian cells. Stabilizes both enzymes and retain them in the ER without contributing to the catalytic activity. Binds UBQLN1. Interacts with ERO1B. Interacts with ILDR2. Interacts with ERN1/IRE1A (via N-terminus); the interaction is enhanced by phosphorylation of P4HB by FAM20C in response to endoplasmic reticulum stress and results in attenuation of ERN1 activity. Post-translationally, phosphorylation of Ser-358 by FAM20C is induced by endoplasmic reticulum stress and results in a functional switch from oxidoreductase to molecular chaperone. It also promotes interaction with ERN1.

It is found in the endoplasmic reticulum. It localises to the endoplasmic reticulum lumen. Its subcellular location is the melanosome. The protein localises to the cell membrane. The enzyme catalyses Catalyzes the rearrangement of -S-S- bonds in proteins.. In terms of biological role, this multifunctional protein catalyzes the formation, breakage and rearrangement of disulfide bonds. At the cell surface, seems to act as a reductase that cleaves disulfide bonds of proteins attached to the cell. May therefore cause structural modifications of exofacial proteins. Inside the cell, seems to form/rearrange disulfide bonds of nascent proteins. At high concentrations and following phosphorylation by FAM20C, functions as a chaperone that inhibits aggregation of misfolded proteins. At low concentrations, facilitates aggregation (anti-chaperone activity). May be involved with other chaperones in the structural modification of the TG precursor in hormone biogenesis. Also acts as a structural subunit of various enzymes such as prolyl 4-hydroxylase and microsomal triacylglycerol transfer protein MTTP. Receptor for LGALS9; the interaction retains P4HB at the cell surface of Th2 T helper cells, increasing disulfide reductase activity at the plasma membrane, altering the plasma membrane redox state and enhancing cell migration. This chain is Protein disulfide-isomerase (P4HB), found in Oryctolagus cuniculus (Rabbit).